A 206-amino-acid polypeptide reads, in one-letter code: Dephospho-CoA kinase (206 aa).

The DPCK domain maps to 4-200; it reads IVALTGGIGS…AHYLQLASQF (197 aa). Position 12 to 17 (12 to 17) interacts with ATP; that stretch reads GSGKST.

It belongs to the CoaE family.

Its subcellular location is the cytoplasm. It catalyses the reaction 3'-dephospho-CoA + ATP = ADP + CoA + H(+). Its pathway is cofactor biosynthesis; coenzyme A biosynthesis; CoA from (R)-pantothenate: step 5/5. Catalyzes the phosphorylation of the 3'-hydroxyl group of dephosphocoenzyme A to form coenzyme A. The protein is Dephospho-CoA kinase of Shigella boydii serotype 4 (strain Sb227).